We begin with the raw amino-acid sequence, 92 residues long: Putative pterin-4-alpha-carbinolamine dehydratase 2 (92 aa).

It belongs to the pterin-4-alpha-carbinolamine dehydratase family.

It carries out the reaction (4aS,6R)-4a-hydroxy-L-erythro-5,6,7,8-tetrahydrobiopterin = (6R)-L-erythro-6,7-dihydrobiopterin + H2O. The sequence is that of Putative pterin-4-alpha-carbinolamine dehydratase 2 from Gloeobacter violaceus (strain ATCC 29082 / PCC 7421).